The chain runs to 285 residues: tRNA uridine(34) hydroxylase (285 aa).

Positions 130 to 225 (RGDDVVFFDG…YGEAFGDTGL (96 aa)) constitute a Rhodanese domain. Residue cysteine 185 is the Cysteine persulfide intermediate of the active site.

The protein belongs to the TrhO family.

The catalysed reaction is uridine(34) in tRNA + AH2 + O2 = 5-hydroxyuridine(34) in tRNA + A + H2O. In terms of biological role, catalyzes oxygen-dependent 5-hydroxyuridine (ho5U) modification at position 34 in tRNAs. The sequence is that of tRNA uridine(34) hydroxylase from Rhodococcus opacus (strain B4).